The sequence spans 128 residues: MKKFLEKKLKKIAYERIDILMSLAEEEAKKGNWDRAKRYVYLARRIAMKMRIRFPKKWKRRICKKCGTFLLYGRNARVRIKSKRYPHVVITCLECGAIYRIPMIREKKEKRRKKLEERLKAKSNSQTS.

Residues C63, C66, C92, and C95 each coordinate Zn(2+).

Belongs to the eukaryotic/archaeal RNase P protein component 4 family. As to quaternary structure, consists of a catalytic RNA component and at least 4 protein subunits. Forms a subcomplex with Rnp1 which stimulates the catalytic RNA. Requires Zn(2+) as cofactor.

It is found in the cytoplasm. It carries out the reaction Endonucleolytic cleavage of RNA, removing 5'-extranucleotides from tRNA precursor.. Part of ribonuclease P, a protein complex that generates mature tRNA molecules by cleaving their 5'-ends. This is Ribonuclease P protein component 4 from Methanocaldococcus jannaschii (strain ATCC 43067 / DSM 2661 / JAL-1 / JCM 10045 / NBRC 100440) (Methanococcus jannaschii).